The following is a 238-amino-acid chain: Survival of motor neuron-related-splicing factor 30 (238 aa).

One can recognise a Tudor domain in the interval 72–132 (SWKVGEKCMA…RPVEEGRKAK (61 aa)). The short motif at 142–160 (KKEMIAAQREYKKKKALKK) is the Nuclear localization signal element.

Belongs to the SMN family. As to quaternary structure, associates with spliceosomes.

It localises to the nucleus speckle. Its subcellular location is the nucleus. The protein localises to the cajal body. Functionally, involved in spliceosome assembly. The sequence is that of Survival of motor neuron-related-splicing factor 30 (smndc1) from Xenopus tropicalis (Western clawed frog).